A 231-amino-acid chain; its full sequence is Large ribosomal subunit protein uL1 (231 aa).

This sequence belongs to the universal ribosomal protein uL1 family. As to quaternary structure, part of the 50S ribosomal subunit.

Functionally, binds directly to 23S rRNA. The L1 stalk is quite mobile in the ribosome, and is involved in E site tRNA release. Protein L1 is also a translational repressor protein, it controls the translation of the L11 operon by binding to its mRNA. This is Large ribosomal subunit protein uL1 from Cellvibrio japonicus (strain Ueda107) (Pseudomonas fluorescens subsp. cellulosa).